We begin with the raw amino-acid sequence, 400 residues long: 3-phenylpropionate/cinnamic acid dioxygenase ferredoxin--NAD(+) reductase component (400 aa).

An FAD-binding site is contributed by 5–36; that stretch reads TIIIVGGGQAAAMAAASLRQQGFTGELHLFSD. NAD(+) is bound at residue 146-174; that stretch reads SVVIVGAGTIGLELAASATQRGCKVTVIE.

The protein belongs to the bacterial ring-hydroxylating dioxygenase ferredoxin reductase family. This dioxygenase system consists of four proteins: the two subunits of the hydroxylase component (HcaE and HcaF), a ferredoxin (HcaC) and a ferredoxin reductase (HcaD). The cofactor is FAD.

The catalysed reaction is 2 reduced [2Fe-2S]-[ferredoxin] + NAD(+) + H(+) = 2 oxidized [2Fe-2S]-[ferredoxin] + NADH. The protein operates within aromatic compound metabolism; 3-phenylpropanoate degradation. Its function is as follows. Part of the multicomponent 3-phenylpropionate dioxygenase, that converts 3-phenylpropionic acid (PP) and cinnamic acid (CI) into 3-phenylpropionate-dihydrodiol (PP-dihydrodiol) and cinnamic acid-dihydrodiol (CI-dihydrodiol), respectively. This is 3-phenylpropionate/cinnamic acid dioxygenase ferredoxin--NAD(+) reductase component from Escherichia coli (strain SMS-3-5 / SECEC).